We begin with the raw amino-acid sequence, 134 residues long: Flagellar basal-body rod protein FlgC (134 aa).

This sequence belongs to the flagella basal body rod proteins family. As to quaternary structure, the basal body constitutes a major portion of the flagellar organelle and consists of four rings (L,P,S, and M) mounted on a central rod. The rod consists of about 26 subunits of FlgG in the distal portion, and FlgB, FlgC and FlgF are thought to build up the proximal portion of the rod with about 6 subunits each.

It is found in the bacterial flagellum basal body. This chain is Flagellar basal-body rod protein FlgC (flgC), found in Salmonella typhi.